Here is a 294-residue protein sequence, read N- to C-terminus: MQTFSSAAALTSILRRTTIYHGGFGTGLRIRRSFYFLSAIRQENPNVTKNPHPNKTILRSFLAPVLPLDEKPNLVELQAIGTIATALADYMRVIVQDVPESDNGEDDKIGVELLCVVRKLLKKIGRTVLVGDKVLVDKVDWVDRRAKIINVFDRVSEVLDPPVANVDHLVILFSLDQPKIDPFTLTRFLVEAESIGIRITVALNKCELVTQEEVESWKIRLRSWNYEPLFCSVGTKVGIDEIAFNLRNQTSVIVGPSGVGKSSLINILRSSYGGDIKHEEVFKPVSFFLSYFIL.

The transit peptide at 1-68 (MQTFSSAAAL…RSFLAPVLPL (68 aa)) directs the protein to the mitochondrion. The CP-type G domain maps to 155–294 (VSEVLDPPVA…VSFFLSYFIL (140 aa)). GTP is bound at residue 255–263 (GPSGVGKSS).

This sequence belongs to the TRAFAC class YlqF/YawG GTPase family.

It localises to the mitochondrion. The protein is Small ribosomal subunit biogenesis GTPase RsgA 2, mitochondrial of Arabidopsis thaliana (Mouse-ear cress).